Consider the following 617-residue polypeptide: Sphingosine kinase 2 (617 aa).

A required for binding to sulfatide and phosphoinositides and for membrane localization region spans residues 1 to 140; the sequence is MAPPPLLPVA…LSGDQEITPE (140 aa). A Nuclear localization signal motif is present at residues 87–95; it reads RGRRGGRRR. Positions 143 to 290 constitute a DAGKc domain; it reads PRKPRLLILV…LDLLSVTLAS (148 aa). ATP contacts are provided by residues 153-155 and 185-189; these read NPF and TERQN. 210–213 lines the substrate pocket; sequence SGDG. Asp-212 serves as the catalytic Proton donor/acceptor. Residues Glu-217 and 242–244 each bind ATP; that span reads GSG. Asp-309 is a substrate binding site. 2 residues coordinate ATP: Arg-316 and Arg-322. Ser-358 and Ser-364 each carry phosphoserine. The segment at 371–472 is disordered; that stretch reads APAPAATHSP…GFLPPTHSAP (102 aa). A Phosphothreonine modification is found at Thr-377. Residues 381 to 390 carry the Nuclear export signal motif; sequence LHRSVSDLPL. Residues Ser-384 and Ser-386 each carry the phosphoserine modification. Residues 412 to 426 are compositionally biased toward gly residues; that stretch reads NGGGPELTGDWGGAG. Thr-578 is modified (phosphothreonine). ATP is bound at residue 586-588; it reads DGE.

In terms of assembly, interacts with histone H3. Interacts with HDAC1, HDAC2, MBD2 and SIN3A. Interacts with EEF1A1; the interaction enhances SPHK2 kinase activity. Interacts with PHB2. Mg(2+) is required as a cofactor. In terms of processing, phosphorylated by PKD on Ser-384 and Ser-386 upon PMA treatment. Phosphorylation induces export from the nucleus to the cytoplasm. Phosphorylated by MAPK1 and MAPK2 at Thr-578, phosphorylation is induced by agonists such as EGF and PMA and increases kinase activity. Post-translationally, cleaved by CASP1 in apoptotic cells. The truncated form is released from cells. As to expression, expressed in heart, brain, liver, kidney and testis. Expressed by mast cells (at protein level). In the substantia nigra, expressed by dopaminergic neurons (at protein level).

Its subcellular location is the lysosome membrane. It is found in the cytoplasm. The protein localises to the cell membrane. It localises to the endoplasmic reticulum. The protein resides in the nucleus. Its subcellular location is the mitochondrion inner membrane. The catalysed reaction is a sphingoid base + ATP = a sphingoid 1-phosphate + ADP + H(+). It catalyses the reaction sphing-4-enine + ATP = sphing-4-enine 1-phosphate + ADP + H(+). The enzyme catalyses sphinganine + ATP = sphinganine 1-phosphate + ADP + H(+). It carries out the reaction (4R)-hydroxysphinganine + ATP = (4R)-hydroxysphinganine 1-phosphate + ADP + H(+). In terms of biological role, catalyzes the phosphorylation of sphingosine to form sphingosine-1-phosphate (SPP), a lipid mediator with both intra- and extracellular functions. Also acts on D-erythro-dihydrosphingosine, D-erythro-sphingosine and L-threo-dihydrosphingosine. Binds phosphoinositides. In contrast to prosurvival SPHK1, has a positive effect on intracellular ceramide levels, inhibits cells growth and enhances apoptosis. In mitochondria, is important for cytochrome-c oxidase assembly and mitochondrial respiration. The SPP produced in mitochondria binds PHB2 and modulates the regulation via PHB2 of complex IV assembly and respiration. In nucleus, plays a role in epigenetic regulation of gene expression. Interacts with HDAC1 and HDAC2 and, through SPP production, inhibits their enzymatic activity, preventing the removal of acetyl groups from lysine residues with histones. Up-regulates acetylation of histone H3-K9, histone H4-K5 and histone H2B-K12. In nucleus, may have an inhibitory effect on DNA synthesis and cell cycle. In mast cells, is the main regulator of SPP production which mediates calcium influx, NF-kappa-B activation, cytokine production, such as TNF and IL6, and degranulation of mast cells. In dopaminergic neurons, is involved in promoting mitochondrial functions regulating ATP and ROS levels. Also involved in the regulation of glucose and lipid metabolism. This is Sphingosine kinase 2 from Mus musculus (Mouse).